We begin with the raw amino-acid sequence, 359 residues long: Glycerol-1-phosphate dehydrogenase [NAD(P)+] (359 aa).

Residues 107 to 111 (GRVID) and 129 to 132 (TAAS) each bind NAD(+). D134 serves as a coordination point for substrate. S138 contributes to the NAD(+) binding site. D181 is a substrate binding site. Zn(2+)-binding residues include D181 and H261. H265 provides a ligand contact to substrate. H277 contributes to the Zn(2+) binding site.

It belongs to the glycerol-1-phosphate dehydrogenase family. The cofactor is Zn(2+).

Its subcellular location is the cytoplasm. It carries out the reaction sn-glycerol 1-phosphate + NAD(+) = dihydroxyacetone phosphate + NADH + H(+). It catalyses the reaction sn-glycerol 1-phosphate + NADP(+) = dihydroxyacetone phosphate + NADPH + H(+). The protein operates within membrane lipid metabolism; glycerophospholipid metabolism. Its function is as follows. Catalyzes the NAD(P)H-dependent reduction of dihydroxyacetonephosphate (DHAP or glycerone phosphate) to glycerol 1-phosphate (G1P). The G1P thus generated is used as the glycerophosphate backbone of phospholipids in the cellular membranes of Archaea. The sequence is that of Glycerol-1-phosphate dehydrogenase [NAD(P)+] from Methanosphaerula palustris (strain ATCC BAA-1556 / DSM 19958 / E1-9c).